We begin with the raw amino-acid sequence, 165 residues long: uncharacterized protein (165 aa).

An N-acetyltransferase domain is found at 8–159 (LLVNYKTLEE…QGVQEQTTKP (152 aa)).

This is an uncharacterized protein from Shouchella clausii (strain KSM-K16) (Alkalihalobacillus clausii).